The sequence spans 446 residues: Mitochondrial ribonuclease P protein 1 homolog (446 aa).

The N-terminal 24 residues, Met1 to Gln24, are a transit peptide targeting the mitochondrion. Positions Pro41–Glu67 are disordered. A phosphoserine mark is found at Ser50 and Ser57. Thr60 bears the Phosphothreonine mark. Position 62 is a phosphoserine (Ser62). The stretch at Leu119 to Ile158 forms a coiled coil. One can recognise an SAM-dependent MTase TRM10-type domain in the interval Gln179–Gln373.

It belongs to the class IV-like SAM-binding methyltransferase superfamily. TRM10 family. Component of mitochondrial ribonuclease P, a complex composed of rswl/MRPP1, scu/MRPP2 and mldr/MRPP3.

The protein localises to the mitochondrion. Its function is as follows. Mitochondrial tRNA N1-methyltransferase involved in mitochondrial tRNA maturation. Component of mitochondrial ribonuclease P, a complex composed of rswl/MRPP1, scu/MRPP2 and mldr/MRPP3., which cleaves tRNA molecules in their 5'-ends. Essential for the structural and functional integrity of mitochondria. Function is essential for pupal development. In Drosophila melanogaster (Fruit fly), this protein is Mitochondrial ribonuclease P protein 1 homolog.